The primary structure comprises 288 residues: Glucose-1-phosphate thymidylyltransferase (288 aa).

Residues aspartate 108 and aspartate 223 each coordinate Mg(2+).

Belongs to the glucose-1-phosphate thymidylyltransferase family. As to quaternary structure, homotetramer. Mg(2+) is required as a cofactor.

The enzyme catalyses dTTP + alpha-D-glucose 1-phosphate + H(+) = dTDP-alpha-D-glucose + diphosphate. Its function is as follows. Catalyzes the formation of dTDP-glucose, from dTTP and glucose 1-phosphate, as well as its pyrophosphorolysis. This Neisseria meningitidis serogroup A / serotype 4A (strain DSM 15465 / Z2491) protein is Glucose-1-phosphate thymidylyltransferase (rmlA1).